Here is a 102-residue protein sequence, read N- to C-terminus: Small ribosomal subunit protein uS10 (102 aa).

It belongs to the universal ribosomal protein uS10 family. As to quaternary structure, part of the 30S ribosomal subunit.

Involved in the binding of tRNA to the ribosomes. The protein is Small ribosomal subunit protein uS10 of Geotalea daltonii (strain DSM 22248 / JCM 15807 / FRC-32) (Geobacter daltonii).